A 455-amino-acid polypeptide reads, in one-letter code: Alcohol acyl transferase 1 allele RGb (455 aa).

Active-site proton acceptor residues include H164 and N385.

Belongs to the plant acyltransferase family.

In terms of biological role, involved in the biosynthesis of volatile esters which confer ripe apple fruit flavor. Alcohol acyl transferase that can use a wide range of alcohols as substrate to produce esters. The protein is Alcohol acyl transferase 1 allele RGb of Malus domestica (Apple).